A 279-amino-acid polypeptide reads, in one-letter code: MKQTDATNIEESIQTDFKKDMSYGDYLQLDSLLTSQQRLSDHHDEMLFIVIHQTSELWMKLILHEMTAAIQAIADDQLERSFKMLARVSKIQQQLIQSWSVLSTLTPAEYLEFRDSLGHSSGFQSYQNRQIEFSLGFKNAQMLRVYEHETALFAQLNDDLQTPSIYDETVRAMHRRGLPIDEAVLNRDVTQDWEADASVEAAWAIVYQDVEQYWDLYELGEKLLDIGSQQQMWRFNHMSTVERIIGQKPGTGGSSGVSYLRRVLDHRFFPELWSVRTKL.

Substrate contacts are provided by residues 48–52 (FIVIH), Tyr-110, and Arg-114. His-237 is a heme binding site. Residue Thr-251 coordinates substrate.

This sequence belongs to the tryptophan 2,3-dioxygenase family. Homotetramer. It depends on heme as a cofactor.

It catalyses the reaction L-tryptophan + O2 = N-formyl-L-kynurenine. It functions in the pathway amino-acid degradation; L-tryptophan degradation via kynurenine pathway; L-kynurenine from L-tryptophan: step 1/2. Functionally, heme-dependent dioxygenase that catalyzes the oxidative cleavage of the L-tryptophan (L-Trp) pyrrole ring and converts L-tryptophan to N-formyl-L-kynurenine. Catalyzes the oxidative cleavage of the indole moiety. This is Tryptophan 2,3-dioxygenase from Exiguobacterium sibiricum (strain DSM 17290 / CCUG 55495 / CIP 109462 / JCM 13490 / 255-15).